The following is a 366-amino-acid chain: D-alanine--D-alanine ligase (366 aa).

The region spanning 149–358 (KIAFDHAGLP…FSELVDTLIQ (210 aa)) is the ATP-grasp domain. 185–240 (ETTLEYPCFVKPANLGSSVGIAKVRSRSELETALDNAASYDRRIIVEAGVEAKELE) provides a ligand contact to ATP. The Mg(2+) site is built by D311, E325, and N327.

It belongs to the D-alanine--D-alanine ligase family. The cofactor is Mg(2+). It depends on Mn(2+) as a cofactor.

It localises to the cytoplasm. It catalyses the reaction 2 D-alanine + ATP = D-alanyl-D-alanine + ADP + phosphate + H(+). Its pathway is cell wall biogenesis; peptidoglycan biosynthesis. Functionally, cell wall formation. This chain is D-alanine--D-alanine ligase, found in Trichodesmium erythraeum (strain IMS101).